The sequence spans 102 residues: DET1- and DDB1-associated protein 1 (102 aa).

Ala2 bears the N-acetylalanine mark. Phosphoserine occurs at positions 33 and 95. The interval Asn67 to Thr102 is disordered.

This sequence belongs to the DDA1 family. Component of numerous DCX (DDB1-CUL4-X-box) E3 ubiquitin-protein ligase complexes which consist of a core of DDB1, cullin-4 (CUL4A or CUL4B), DDA1 and RBX1. Component of the DCX(DCAF15) complex, also named CLR4(DCAF15) complex, composed of DCAF15, DDB1, cullin-4 (CUL4A or CUL4B), DDA1 and RBX1. Part of the DDD core complex containing DET1, DDA1 and DDB1; the DDD core complex recruits a specific UBE2E enzyme, such as UBE2E1, UBE2E2 UBE2E3, to form specific DDD-E2 complexes.

Its pathway is protein modification; protein ubiquitination. Its function is as follows. Functions as a component of numerous distinct DCX (DDB1-CUL4-X-box) E3 ubiquitin-protein ligase complexes which mediate the ubiquitination and subsequent proteasomal degradation of target proteins. In the DCX complexes, acts as a scaffolding subunit required to stabilize the complex. The protein is DET1- and DDB1-associated protein 1 of Mus musculus (Mouse).